The sequence spans 176 residues: Small ribosomal subunit protein uS5 (176 aa).

In terms of domain architecture, S5 DRBM spans Leu11–Val74.

Belongs to the universal ribosomal protein uS5 family. In terms of assembly, part of the 30S ribosomal subunit. Contacts proteins S4 and S8.

Its function is as follows. With S4 and S12 plays an important role in translational accuracy. Located at the back of the 30S subunit body where it stabilizes the conformation of the head with respect to the body. The sequence is that of Small ribosomal subunit protein uS5 from Rickettsia akari (strain Hartford).